We begin with the raw amino-acid sequence, 284 residues long: MAERGGEGGAERGGDRGDFGRGFGGGRGGGRGRDRGPRGRGRRGGRASEETKWVPVTKLGRLVADNKITKLEQIYLHSLPVKEYQIIDHLVGPTLKDEVMKIMPVQKQTRAGQRTRFKAFVVVGDGNGHVGLGVKCSKEVATAIRGAIILAKLSVVPVRRGYWGNKIGKPHTVPCKVTGKCGSVTVRMVPAPRGSGIVAARVPKKVLQFAGIDDVFTSSRGSTKTLGNFVKATFDCLQKTYGFLTPEFWKETRFSRSPYQEHTDFLSTKAVSATKVITEGEDQA.

Basic and acidic residues predominate over residues 1–19 (MAERGGEGGAERGGDRGDF). The disordered stretch occupies residues 1–51 (MAERGGEGGAERGGDRGDFGRGFGGGRGGGRGRDRGPRGRGRRGGRASEET). Over residues 20–29 (GRGFGGGRGG) the composition is skewed to gly residues. Residues 95–158 (LKDEVMKIMP…ILAKLSVVPV (64 aa)) form the S5 DRBM domain.

The protein belongs to the universal ribosomal protein uS5 family.

The chain is Small ribosomal subunit protein uS5z (RPS2A) from Arabidopsis thaliana (Mouse-ear cress).